The following is a 367-amino-acid chain: Ribosomal lysine N-methyltransferase 5 (367 aa).

S-adenosyl-L-methionine contacts are provided by residues Trp110, Gly170–Gly172, Asp192, Trp256, and Met288.

It belongs to the class I-like SAM-binding methyltransferase superfamily. RKM5 family.

Its function is as follows. S-adenosyl-L-methionine-dependent protein-lysine N-methyltransferase that monomethylates 60S ribosomal protein L1 (RPL1A and RPL1B) at 'Lys-46'. In Saccharomyces cerevisiae (strain JAY291) (Baker's yeast), this protein is Ribosomal lysine N-methyltransferase 5 (RKM5).